A 964-amino-acid chain; its full sequence is Pumilio homolog 3 (964 aa).

The tract at residues 1-22 (MMIPELGRRPMHRGNEDSSFGD) is disordered. Position 192 is a phosphoserine (Ser192). 3 disordered regions span residues 204-235 (PVVQQPSRPASRNTFDENVDSNNNLSPSASQG), 256-300 (GTPD…TSGL), and 343-388 (DGHN…VANP). 2 stretches are compositionally biased toward polar residues: residues 207–216 (QQPSRPASRN) and 223–234 (DSNNNLSPSASQ). The residue at position 257 (Thr257) is a Phosphothreonine. Polar residues-rich tracts occupy residues 287-300 (TSNQSPFNGVTSGL) and 356-384 (RSDQARGTASCRNSQMRGSQGSAYNSGSG). One can recognise a PUM-HD domain in the interval 606-946 (FGSSMLEEFK…HIVARVEKLV (341 aa)). Pumilio repeat units lie at residues 626–661 (EIAGHVVEFSSDQYGSRFIQQKLETATTDEKNMVYE), 662–697 (EIMPKALALMTDVFGNYVIQKFFEHGLPPQRRELGE), 698–733 (KLIDNVLPLSLQMYGCRVIQKAIEVVDLDQKIQMVK), 734–769 (ELDGHVMRCVRDQNGNHVVQKCIECVPEENIEFIIS), 770–806 (TFFGHVVTLSTHPYGCRVIQRVLEHCHNPDTQSKVME), 807–842 (EILSTVSMLTQDQYGNYVVQHVLEHGKPDERTVIIK), 843–878 (ELAGKIVQMSQQKFASNVVEKCLTFGGPEERELLVN), and 879–920 (EMLG…LILT).

It is found in the cytoplasm. Sequence-specific RNA-binding protein that regulates translation and mRNA stability by binding the 3'-UTR of target mRNAs. Binds the APUM-binding elements (APBEs) in the 3'-UTR mRNA sequence of CLV1, PNH, WUS and FAS2. This is Pumilio homolog 3 (APUM3) from Arabidopsis thaliana (Mouse-ear cress).